Here is a 419-residue protein sequence, read N- to C-terminus: eIF5-mimic protein 1 (419 aa).

The tract at residues Met1–Lys22 is disordered. An N6-acetyllysine modification is found at Lys117. In terms of domain architecture, W2 spans Val248–Glu415. Phosphoserine occurs at positions 412 and 414.

This sequence belongs to the BZW family. As to quaternary structure, interacts with EIF3E. Interacts with EIF2S2. Interacts with EIF3C.

It is found in the cytoplasm. Its function is as follows. Translation initiation regulator which represses non-AUG initiated translation and repeat-associated non-AUG (RAN) initiated translation by acting as a competitive inhibitor of eukaryotic translation initiation factor 5 (EIF5) function. Increases the accuracy of translation initiation by impeding EIF5-dependent translation from non-AUG codons by competing with it for interaction with EIF2S2 within the 43S pre-initiation complex (PIC) in an EIF3C-binding dependent manner. This is eIF5-mimic protein 1 (BZW2) from Homo sapiens (Human).